The sequence spans 1171 residues: ATP-dependent helicase/deoxyribonuclease subunit B (1171 aa).

The UvrD-like helicase ATP-binding domain occupies 1-343 (MSLRFVIGRA…LVAEENYRYR (343 aa)). 8-15 (GRAGSGKS) contributes to the ATP binding site. Residues 281–587 (MEQPRFHSPA…QFANIPPSLD (307 aa)) enclose the UvrD-like helicase C-terminal domain. The [4Fe-4S] cluster site is built by Cys-805, Cys-1129, Cys-1132, and Cys-1138.

This sequence belongs to the helicase family. AddB/RexB type 1 subfamily. In terms of assembly, heterodimer of AddA and AddB. Requires Mg(2+) as cofactor. [4Fe-4S] cluster serves as cofactor.

In terms of biological role, the heterodimer acts as both an ATP-dependent DNA helicase and an ATP-dependent, dual-direction single-stranded exonuclease. Recognizes the chi site generating a DNA molecule suitable for the initiation of homologous recombination. The AddB subunit has 5' -&gt; 3' nuclease activity but not helicase activity. The polypeptide is ATP-dependent helicase/deoxyribonuclease subunit B (Bacillus thuringiensis (strain Al Hakam)).